The sequence spans 2227 residues: Genome polyprotein (2227 aa).

Short sequence motifs ((L)YPX(n)L motif) lie at residues 167–171 (YPHGL) and 200–205 (YPVWEL). Residues 766-836 (MMSRIAAGDL…PRKMKGLFSQ (71 aa)) form an involved in P1-2A pentamerization region. A helical transmembrane segment spans residues 1011 to 1031 (TVEIINTVLCFVKSGILLYVI). Residues 1043–1070 (IGLLRVMNYADIGCSVISCGKVFSKMLE) are membrane-penetrating ability. A coiled-coil region spans residues 1127–1152 (KKKDILNILKDNQQKIEKAIEEADNF). Residues 1204 to 1366 (HQKLKNLGSI…SFFKNPHNDM (163 aa)) form the SF3 helicase domain. 1230 to 1237 (GKRGGGKS) contributes to the ATP binding site. A helical transmembrane segment spans residues 1462 to 1482 (WVAVGAAVGILGVLVGGWFVY). Tyr-1499 is modified (O-(5'-phospho-RNA)-tyrosine). A Peptidase C3 domain is found at 1514–1728 (DPVESQSTLE…VAKLVTQEMF (215 aa)). Residues His-1563, Asp-1603, and Cys-1691 each act as for protease 3C activity in the active site. Positions 1976–2097 (DVGLDLDFSA…VFSRDVQIDN (122 aa)) constitute a RdRp catalytic domain.

Belongs to the picornaviridae polyprotein family. As to quaternary structure, homodimer. Homomultimer; probably interacts with membranes in a multimeric form. Seems to assemble into amyloid-like fibers. Homodimer. Monomer. Interacts with protein 3CD. In terms of assembly, interacts with host ACBD3. As to quaternary structure, interacts with protein 3AB. Interacts with human MAVS. In terms of assembly, homodimer; disulfide-linked. As to quaternary structure, homopentamer. Homooligomer. Interacts with capsid protein VP2. Interacts with capsid protein VP3. In terms of assembly, interacts with capsid protein VP1. Interacts with capsid protein VP3. As to quaternary structure, interacts with capsid protein VP1. Interacts with capsid protein VP2. Specific enzymatic cleavages by viral protease in vivo yield a variety of precursors and mature proteins. Polyprotein processing intermediates are produced, such as P1-2A which is a functional precursor of the structural proteins, VP0 which is a VP4-VP2 precursor, VP1-2A precursor, 3ABC precursor which is a stable and catalytically active precursor of 3A, 3B and 3C proteins, 3AB and 3CD precursors. The assembly signal 2A is removed from VP1-2A by a host protease, possibly host Cathepsin L. This cleavage occurs over a region of 3 amino-acids probably generating VP1 proteins with heterogeneous C-termini. In terms of processing, during virion maturation, immature virions are rendered infectious following cleavage of VP0 into VP4 and VP2. This maturation seems to be an autocatalytic event triggered by the presence of RNA in the capsid and is followed by a conformational change of the particle. Post-translationally, the assembly signal 2A is removed from VP1-2A by a host protease, possibly host Cathepsin L in naked virions. This cleavage does not occur in enveloped virions. This cleavage occurs over a region of 3 amino-acids probably generating VP1 proteins with heterogeneous C-termini. VPg is uridylylated prior to priming replication into VPg-pUpU. In terms of processing, unlike other picornaviruses, does not seem to be myristoylated.

It is found in the virion. It localises to the host endosome. The protein resides in the host multivesicular body. The protein localises to the host membrane. Its subcellular location is the host mitochondrion outer membrane. It is found in the host cytoplasm. It localises to the host cytoplasmic vesicle membrane. It catalyses the reaction RNA(n) + a ribonucleoside 5'-triphosphate = RNA(n+1) + diphosphate. The enzyme catalyses a ribonucleoside 5'-triphosphate + H2O = a ribonucleoside 5'-diphosphate + phosphate + H(+). The catalysed reaction is Selective cleavage of Gln-|-Gly bond in the poliovirus polyprotein. In other picornavirus reactions Glu may be substituted for Gln, and Ser or Thr for Gly.. Capsid proteins VP1, VP2, and VP3 form a closed capsid enclosing the viral positive strand RNA genome. All these proteins contain a beta-sheet structure called beta-barrel jelly roll. Together they form an icosahedral capsid (T=3) composed of 60 copies of each VP1, VP2, and VP3, with a diameter of approximately 300 Angstroms. VP1 is situated at the 12 fivefold axes, whereas VP2 and VP3 are located at the quasi-sixfold axes. The naked capsid interacts with the host receptor HAVCR1 to provide virion attachment to and probably entry into the target cell. Its function is as follows. VP0 precursor is a component of the immature procapsids. In terms of biological role, plays a role in the assembly of the 12 pentamers into an icosahedral structure. Has not been detected in mature virions, supposedly owing to its small size. Functionally, precursor component of immature procapsids that corresponds to an extended form of the structural protein VP1. After maturation, possibly by the host Cathepsin L, the assembly signal 2A is cleaved to give rise to the mature VP1 protein. Functions as a viroporin. Affects membrane integrity and causes an increase in membrane permeability. Involved in host intracellular membrane rearrangements probably to give rise to the viral factories. Does not disrupt calcium homeostasis or glycoprotein trafficking. Antagonizes the innate immune response of the host by suppressing IFN-beta synthesis, which it achieves by interfering with the RIG-I/IFIH1 pathway. Its function is as follows. Affects membrane integrity and causes an increase in membrane permeability. In terms of biological role, associates with and induces structural rearrangements of intracellular membranes. Displays RNA-binding activity. Functionally, the precursor 3ABC is targeted to the mitochondrial membrane where protease 3C activity cleaves and inhibits the host antiviral protein MAVS, thereby disrupting activation of IRF3 through the IFIH1/MDA5 pathway. In vivo, the protease activity of 3ABC precursor is more efficient in cleaving the 2BC precursor than that of protein 3C. The 3ABC precursor may therefore play a role in the proteolytic processing of the polyprotein. Possible viroporin. Interacts with the 3CD precursor and with RNA structures found at both the 5'- and 3'-termini of the viral genome. Since the 3AB precursor contains the hydrophobic domain 3A, it probably anchors the whole viral replicase complex to intracellular membranes on which viral RNA synthesis occurs. Its function is as follows. May serve as membrane anchor to the 3AB and 3ABC precursors via its hydrophobic domain. May interact with RNA. In terms of biological role, acts as a primer for viral RNA replication and remains covalently bound to viral genomic RNA. VPg is uridylylated prior to priming replication into VPg-pUpU. The VPg-pUpU is then used as primer on the genomic RNA poly(A) by the RNA-dependent RNA polymerase to replicate the viral genome. Functionally, cysteine protease that generates mature viral proteins from the precursor polyprotein. In addition to its proteolytic activity, it binds to viral RNA, and thus influences viral genome replication. RNA and substrate bind cooperatively to the protease. Cleaves IKBKG/NEMO to impair innate immune signaling. Cleaves host PABPC1 which may participate in the switch of viral translation to RNA synthesis. Interacts with the 3AB precursor and with RNA structures found at both the 5'- and 3'-termini of the viral genome. Disrupts TLR3 signaling by degrading the host adapter protein TICAM1/TRIF. Its function is as follows. RNA-directed RNA polymerase 3D-POL replicates genomic and antigenomic RNA by recognizing replications specific signals. The sequence is that of Genome polyprotein from Human hepatitis A virus genotype IA (isolate H2) (HHAV).